The primary structure comprises 510 residues: Probable cytosol aminopeptidase (510 aa).

Mn(2+)-binding residues include Lys272 and Asp277. Residue Lys284 is part of the active site. Mn(2+) is bound by residues Asp296, Asp355, and Glu357. Residue Arg359 is part of the active site.

Belongs to the peptidase M17 family. Requires Mn(2+) as cofactor.

It localises to the cytoplasm. It catalyses the reaction Release of an N-terminal amino acid, Xaa-|-Yaa-, in which Xaa is preferably Leu, but may be other amino acids including Pro although not Arg or Lys, and Yaa may be Pro. Amino acid amides and methyl esters are also readily hydrolyzed, but rates on arylamides are exceedingly low.. It carries out the reaction Release of an N-terminal amino acid, preferentially leucine, but not glutamic or aspartic acids.. Its function is as follows. Presumably involved in the processing and regular turnover of intracellular proteins. Catalyzes the removal of unsubstituted N-terminal amino acids from various peptides. The polypeptide is Probable cytosol aminopeptidase (Synechococcus sp. (strain JA-2-3B'a(2-13)) (Cyanobacteria bacterium Yellowstone B-Prime)).